The sequence spans 793 residues: Phosphoribosylformylglycinamidine synthase subunit PurL (793 aa).

Residue His53 is part of the active site. The ATP site is built by Tyr56 and Lys95. Glu97 is a binding site for Mg(2+). Residues 98 to 101 (SHNH) and Arg120 contribute to the substrate site. The Proton acceptor role is filled by His99. Asp121 is a binding site for Mg(2+). Residue Gln244 participates in substrate binding. Mg(2+) is bound at residue Asp272. A substrate-binding site is contributed by 316–318 (ESQ). Positions 523 and 560 each coordinate ATP. Asn561 provides a ligand contact to Mg(2+). Position 563 (Ser563) interacts with substrate.

It belongs to the FGAMS family. As to quaternary structure, monomer. Part of the FGAM synthase complex composed of 1 PurL, 1 PurQ and 2 PurS subunits.

Its subcellular location is the cytoplasm. It carries out the reaction N(2)-formyl-N(1)-(5-phospho-beta-D-ribosyl)glycinamide + L-glutamine + ATP + H2O = 2-formamido-N(1)-(5-O-phospho-beta-D-ribosyl)acetamidine + L-glutamate + ADP + phosphate + H(+). The protein operates within purine metabolism; IMP biosynthesis via de novo pathway; 5-amino-1-(5-phospho-D-ribosyl)imidazole from N(2)-formyl-N(1)-(5-phospho-D-ribosyl)glycinamide: step 1/2. Part of the phosphoribosylformylglycinamidine synthase complex involved in the purines biosynthetic pathway. Catalyzes the ATP-dependent conversion of formylglycinamide ribonucleotide (FGAR) and glutamine to yield formylglycinamidine ribonucleotide (FGAM) and glutamate. The FGAM synthase complex is composed of three subunits. PurQ produces an ammonia molecule by converting glutamine to glutamate. PurL transfers the ammonia molecule to FGAR to form FGAM in an ATP-dependent manner. PurS interacts with PurQ and PurL and is thought to assist in the transfer of the ammonia molecule from PurQ to PurL. This is Phosphoribosylformylglycinamidine synthase subunit PurL from Prochlorococcus marinus (strain SARG / CCMP1375 / SS120).